The sequence spans 390 residues: Homeobox protein Meis1 (390 aa).

The region spanning 108 to 192 (GGDVCSSESF…IDLVIDDREG (85 aa)) is the MEIS N-terminal domain. Residues 190–202 (REGGSKSDSEDIT) are compositionally biased toward basic and acidic residues. The tract at residues 190-279 (REGGSKSDSE…KKRHKKRGIF (90 aa)) is disordered. Residues 203–213 (RSANLTDQPSW) show a composition bias toward polar residues. Positions 272 to 334 (RHKKRGIFPK…NARRRIVQPM (63 aa)) form a DNA-binding region, homeobox; TALE-type. An interaction with DNA region spans residues 299 to 329 (YPSEEQKKQLAQDTGLTILQVNNWFINARRR). Positions 335-390 (IDQSNRAVSQGTPYNPDGQPMGGFVMDGQQHMGIRAPGPMSGMGMNMGMEGQWHYM) are required for transcriptional activation.

Belongs to the TALE/MEIS homeobox family. As to quaternary structure, interacts with the N-terminal region of PBX1 to form a heterodimer which binds DNA including a cAMP-responsive sequence in CYP17. Also forms heterodimers with PBX2. Forms heterotrimers with PBX1 or PBX2 and a number of HOX proteins including HOXA9, HOXD4 and HOXD9 where it acts as a non-DNA-binding partner. Also forms heterotrimers with PBX1 and HOX proteins including HOXD9 and HOXD10 where PBX1 is the non-DNA-binding partner. Heterodimer with DLX3. Heterodimer with HOXB13. As to expression, expressed at low level in normal immunohepatopoietic tissues, including the fetal liver. Expressed in a subset of myeloid leukemia cell lines, with the highest expression seen in those with a megakaryocytic-erythroid phenotype. Also expressed at high levels in the cerebellum.

It localises to the nucleus. Acts as a transcriptional regulator of PAX6. Acts as a transcriptional activator of PF4 in complex with PBX1 or PBX2. Required for hematopoiesis, megakaryocyte lineage development and vascular patterning. May function as a cofactor for HOXA7 and HOXA9 in the induction of myeloid leukemias. The sequence is that of Homeobox protein Meis1 (MEIS1) from Homo sapiens (Human).